The following is a 69-amino-acid chain: Large ribosomal subunit protein uL30 (69 aa).

Belongs to the universal ribosomal protein uL30 family. Part of the 50S ribosomal subunit.

This chain is Large ribosomal subunit protein uL30, found in Rhizobium etli (strain ATCC 51251 / DSM 11541 / JCM 21823 / NBRC 15573 / CFN 42).